The following is a 1330-amino-acid chain: ESX-3 secretion system protein EccC3 (1330 aa).

The next 2 helical transmembrane spans lie at 43–63 and 65–85; these read LPYLIGILIVGMIVALVATGM and VISPQTLFFPFVLLLAATALY. 3 FtsK domains span residues 456–662, 811–1000, and 1090–1280; these read GEPL…SVSR, RDPL…RDSN, and LAPV…ADSG. ATP-binding positions include 479 to 486, 829 to 836, and 1107 to 1114; these read GMTGSGKS, GGPKSGKS, and GDARSGKT.

As to quaternary structure, part of the ESX-3 / type VII secretion system (T7SS), which is composed of cytosolic and membrane components. The ESX-3 membrane complex is composed of EccB3, EccC3, EccD3 and EccE3.

The protein resides in the cell inner membrane. Part of the ESX-3 specialized secretion system, which is important for iron and zinc uptake or homeostasis. The protein is ESX-3 secretion system protein EccC3 of Mycobacterium tuberculosis (strain CDC 1551 / Oshkosh).